A 122-amino-acid polypeptide reads, in one-letter code: Aspartate 1-decarboxylase (122 aa).

Catalysis depends on serine 25, which acts as the Schiff-base intermediate with substrate; via pyruvic acid. Serine 25 carries the pyruvic acid (Ser) modification. A substrate-binding site is contributed by threonine 57. The active-site Proton donor is tyrosine 58. 73–75 (GAA) is a substrate binding site.

It belongs to the PanD family. Heterooctamer of four alpha and four beta subunits. The cofactor is pyruvate. In terms of processing, is synthesized initially as an inactive proenzyme, which is activated by self-cleavage at a specific serine bond to produce a beta-subunit with a hydroxyl group at its C-terminus and an alpha-subunit with a pyruvoyl group at its N-terminus.

It localises to the cytoplasm. The enzyme catalyses L-aspartate + H(+) = beta-alanine + CO2. Its pathway is cofactor biosynthesis; (R)-pantothenate biosynthesis; beta-alanine from L-aspartate: step 1/1. In terms of biological role, catalyzes the pyruvoyl-dependent decarboxylation of aspartate to produce beta-alanine. In Bordetella avium (strain 197N), this protein is Aspartate 1-decarboxylase.